We begin with the raw amino-acid sequence, 88 residues long: Co-chaperonin GroES (88 aa).

This sequence belongs to the GroES chaperonin family. Heptamer of 7 subunits arranged in a ring. Interacts with the chaperonin GroEL.

Its subcellular location is the cytoplasm. Together with the chaperonin GroEL, plays an essential role in assisting protein folding. The GroEL-GroES system forms a nano-cage that allows encapsulation of the non-native substrate proteins and provides a physical environment optimized to promote and accelerate protein folding. GroES binds to the apical surface of the GroEL ring, thereby capping the opening of the GroEL channel. The polypeptide is Co-chaperonin GroES (Rubrobacter xylanophilus (strain DSM 9941 / JCM 11954 / NBRC 16129 / PRD-1)).